The sequence spans 360 residues: Phospho-N-acetylmuramoyl-pentapeptide-transferase (360 aa).

The next 10 helical transmembrane spans lie at 27-47 (GAIA…IKSL), 72-92 (TPTM…LLWA), 94-114 (LSNH…AIGF), 135-155 (LACE…LGTP), 167-187 (GYVV…IVAS), 199-219 (GLAI…AYLV), 236-256 (AGEL…FLWF), 263-283 (IFMG…IAVA), 289-309 (VLAI…VQVV), and 337-357 (QVVV…LSTL).

Belongs to the glycosyltransferase 4 family. MraY subfamily. Mg(2+) is required as a cofactor.

Its subcellular location is the cell inner membrane. It carries out the reaction UDP-N-acetyl-alpha-D-muramoyl-L-alanyl-gamma-D-glutamyl-meso-2,6-diaminopimeloyl-D-alanyl-D-alanine + di-trans,octa-cis-undecaprenyl phosphate = di-trans,octa-cis-undecaprenyl diphospho-N-acetyl-alpha-D-muramoyl-L-alanyl-D-glutamyl-meso-2,6-diaminopimeloyl-D-alanyl-D-alanine + UMP. The protein operates within cell wall biogenesis; peptidoglycan biosynthesis. In terms of biological role, catalyzes the initial step of the lipid cycle reactions in the biosynthesis of the cell wall peptidoglycan: transfers peptidoglycan precursor phospho-MurNAc-pentapeptide from UDP-MurNAc-pentapeptide onto the lipid carrier undecaprenyl phosphate, yielding undecaprenyl-pyrophosphoryl-MurNAc-pentapeptide, known as lipid I. The protein is Phospho-N-acetylmuramoyl-pentapeptide-transferase of Beijerinckia indica subsp. indica (strain ATCC 9039 / DSM 1715 / NCIMB 8712).